The primary structure comprises 294 residues: 4-hydroxy-tetrahydrodipicolinate synthase (294 aa).

Thr46 provides a ligand contact to pyruvate. Catalysis depends on Tyr134, which acts as the Proton donor/acceptor. The Schiff-base intermediate with substrate role is filled by Lys163. Position 205 (Ile205) interacts with pyruvate.

Belongs to the DapA family. In terms of assembly, homotetramer; dimer of dimers.

The protein resides in the cytoplasm. The enzyme catalyses L-aspartate 4-semialdehyde + pyruvate = (2S,4S)-4-hydroxy-2,3,4,5-tetrahydrodipicolinate + H2O + H(+). It participates in amino-acid biosynthesis; L-lysine biosynthesis via DAP pathway; (S)-tetrahydrodipicolinate from L-aspartate: step 3/4. In terms of biological role, catalyzes the condensation of (S)-aspartate-beta-semialdehyde [(S)-ASA] and pyruvate to 4-hydroxy-tetrahydrodipicolinate (HTPA). In Clostridium tetani (strain Massachusetts / E88), this protein is 4-hydroxy-tetrahydrodipicolinate synthase.